The chain runs to 457 residues: Protein translocase subunit SecY (457 aa).

10 helical membrane-spanning segments follow: residues 17–37 (IFFT…PVPG), 75–95 (IALG…LVVF), 118–138 (TRLF…KFAL), 162–182 (WVFY…LMWV), 195–215 (ISLI…GSIF), 230–250 (IVSL…TVLI), 287–307 (VIPV…GQFL), 326–346 (VAYS…WTAT), 386–406 (LLGA…GRIL), and 412–432 (VSYF…LDTM).

It belongs to the SecY/SEC61-alpha family. As to quaternary structure, component of the Sec protein translocase complex. Heterotrimer consisting of SecY, SecE and SecG subunits. The heterotrimers can form oligomers, although 1 heterotrimer is thought to be able to translocate proteins. Interacts with the ribosome. Interacts with SecDF, and other proteins may be involved. Interacts with SecA.

Its subcellular location is the cell inner membrane. In terms of biological role, the central subunit of the protein translocation channel SecYEG. Consists of two halves formed by TMs 1-5 and 6-10. These two domains form a lateral gate at the front which open onto the bilayer between TMs 2 and 7, and are clamped together by SecE at the back. The channel is closed by both a pore ring composed of hydrophobic SecY resides and a short helix (helix 2A) on the extracellular side of the membrane which forms a plug. The plug probably moves laterally to allow the channel to open. The ring and the pore may move independently. The protein is Protein translocase subunit SecY of Chlamydia trachomatis serovar D (strain ATCC VR-885 / DSM 19411 / UW-3/Cx).